Consider the following 1201-residue polypeptide: Potassium/sodium hyperpolarization-activated cyclic nucleotide-gated channel 4 (1201 aa).

The Cytoplasmic portion of the chain corresponds to 1–263 (MDKLPPSMRK…IIHPYSDFRF (263 aa)). The segment at 24 to 183 (WIMDEEEDGE…PASASCEQPS (160 aa)) is disordered. Positions 26 to 36 (MDEEEDGEEEG) are enriched in acidic residues. The segment covering 105–118 (SRGGGSGGAGGGSS) has biased composition (gly residues). Basic and acidic residues predominate over residues 121-132 (HLHDSAEERRLI). Position 139 is a phosphoserine (Ser139). Residues 164-174 (ASPPPQQPPQP) show a composition bias toward pro residues. Residues 209–260 (GQSGFMQRQFGAMLQPGVNKFSLRMFGSQKAVEREQERVKSAGFWIIHPYSD) form an involved in subunit assembly region. The chain crosses the membrane as a helical span at residues 264-286 (YWDLTMLLLMVGNLIIIPVGITF). Residues 287–293 (FKDENTT) lie on the Extracellular side of the membrane. A helical transmembrane segment spans residues 294 to 314 (PWIVFNVVSDTFFLIDLVLNF). Residues 315–336 (RTGIVVEDNTEIILDPQRIKMK) are Cytoplasmic-facing. The helical transmembrane segment at 337–359 (YLKSWFVVDFISSIPVDYIFLIV) threads the bilayer. Residues 360–378 (ETRIDSEVYKTARALRIVR) lie on the Extracellular side of the membrane. Residues 379–399 (FTKILSLLRLLRLSRLIRYIH) traverse the membrane as a helical; Voltage-sensor segment. Residues 400–413 (QWEEIFHMTYDLAS) are Cytoplasmic-facing. The chain crosses the membrane as a helical span at residues 414–436 (AVVRIVNLIGMMLLLCHWDGCLQ). At 437–464 (FLVPMLQDFPHDCWVSINGMVNNSWGKQ) the chain is on the extracellular side. Asn458 carries N-linked (GlcNAc...) asparagine glycosylation. The segment at residues 465–486 (YSYALFKAMSHMLCIGYGRQAP) is an intramembrane region (pore-forming). Residues 487 to 491 (VGMSD) lie on the Extracellular side of the membrane. Residues 492-517 (VWLTMLSMIVGATCYAMFIGHATALI) form a helical membrane-spanning segment. At 518-1201 (QSLDSSRRQY…PVRSKLPSNL (684 aa)) the chain is on the cytoplasmic side. 3',5'-cyclic GMP-binding residues include Tyr559, Lys562, Phe564, and Glu566. Gly659, Glu660, Cys662, Arg669, Thr670, Val673, and Arg710 together coordinate 3',5'-cyclic AMP. Disordered stretches follow at residues 804 to 902 (AIFR…TAAA) and 914 to 1201 (ALGG…PSNL). Composition is skewed to low complexity over residues 831–856 (SLIPSALGSASPASSPSQVDTPSSSS) and 866–880 (SAPPGLSPLLPSSSS). The segment covering 881 to 894 (SPPPGACGSPPAPT) has biased composition (pro residues). 2 stretches are compositionally biased toward low complexity: residues 915 to 939 (LGGSLSSSDSPLLTPLQPGARSPQA) and 967 to 995 (RSPSSSPGQLGQPPGELSLGLAAGPSSTP). The segment covering 1029 to 1042 (GHSPGPPRTFPSAP) has biased composition (pro residues). A compositionally biased stretch (low complexity) spans 1045–1056 (ASGSHGSLLLPP). Ser1105 and Ser1108 each carry phosphoserine. Residues 1122–1134 (AGGGSGSSGGLGP) are compositionally biased toward gly residues.

Belongs to the potassium channel HCN family. As to quaternary structure, homotetramer. The potassium channel is composed of a homo- or heterotetrameric complex of pore-forming subunits. Interacts with PEX5L with a 4:4 HCN4:PEX5L stoichiometry; reduces the effects of cAMP on the voltage-dependence and rate of activation. Interacts with IRAG1; regulates HCN4 channel activity. Interacts with IRAG2; regulates HCN4 channel activity. S-palmitoylated. In terms of tissue distribution, detected in a subset of elongated cells in taste buds.

It is found in the cell membrane. The catalysed reaction is K(+)(in) = K(+)(out). The enzyme catalyses Na(+)(in) = Na(+)(out). With respect to regulation, activated by cAMP, and to a lesser extent by cGMP and cCMP. cAMP binding causes a conformation change that leads to the assembly of an active tetramer and channel opening. Binding of cAMP removes a tonic inhibition conferred by cyclic nucleotide-binding domain (CNBD) on channel opening. Cyclic dinucleotides can modulate HCN4 channel; cyclic dinucleotides acting as potent antagonists of cAMP. Inhibited by extracellular Cs(+) ions. Auxiliary subunits can also regulate HCN4 channel. IRAG1 causes a gain-of-function by shifting HCN4 activation to more depolarized membrane potentials in the absence of cAMP. In contrast, IRAG2 causes a loss-of-function by inhibiting cAMP-dependent potentiation of HCN4 activation. Its function is as follows. Hyperpolarization-activated ion channel that are permeable to Na(+) and K(+) ions with very slow activation and inactivation. Exhibits higher selectivity for K(+) over Na(+) ions. Contributes to the native pacemaker currents in heart (If) that regulate the rhythm of heart beat. Contributes to the native pacemaker currents in neurons (Ih). May mediate responses to sour stimuli. This chain is Potassium/sodium hyperpolarization-activated cyclic nucleotide-gated channel 4 (Hcn4), found in Mus musculus (Mouse).